A 181-amino-acid chain; its full sequence is MTDVDIKIENIVASASIGKDIVLTEVSEALEGVNFNREQFPGLVFKLKDPKTAALIFSSGKLVCTGAKSIDDSKLAIKKTVDLMRTIDTEIPHEFEIKIQNIVASANLESTLNLEAVALELEDTEYEPEQFPGLVYRLSDPKVVLLLFGSGKVVCTGAKTRSDAKLGVERAYDRLSELDLI.

2 consecutive repeat copies span residues I8–M84 and I99–L175.

It belongs to the TBP family.

Its function is as follows. General factor that plays a role in the activation of archaeal genes transcribed by RNA polymerase. Binds specifically to the TATA box promoter element which lies close to the position of transcription initiation. The sequence is that of TATA-box-binding protein from Methanobrevibacter smithii (strain ATCC 35061 / DSM 861 / OCM 144 / PS).